A 356-amino-acid polypeptide reads, in one-letter code: TPR repeat-containing protein P27G11.02 (356 aa).

The N-terminal 20 residues, 1–20 (MRMQWIWKSRRSLQNVFIRR), are a transit peptide targeting the mitochondrion. TPR repeat units follow at residues 194–227 (SRLF…TMAN) and 290–323 (AAAF…RKDD).

It is found in the mitochondrion. The sequence is that of TPR repeat-containing protein P27G11.02 from Schizosaccharomyces pombe (strain 972 / ATCC 24843) (Fission yeast).